Here is a 478-residue protein sequence, read N- to C-terminus: MTRFLFAIILGLLLTACQQETVEETEFVPHKLTELRVGTLYGPQIYMTSGQGNSGFDYDMAVLFAEYLDVPLKMVPYTNLAELYDALKKNEIDIIAAGMTETPARREHFRLGPPLYRVNQVLVYREGMPAPKDISDLKGKITVIADSSFVETLTQLQKRHPTLVWDQVTDKDNEELLTMIANKEIDYTIADSSSVQINRRYLPVLRSGLVLEEKLNVVWLLPPTHSDGLMSQLLAFWHQEKLAGTLDHLNEKYFGHVKRFDYIDTRAFLRAIETVLPRYRQHFETHAGDLDWRKLAATSYQESHWNPNARSPTGVRGMMMLTQPTAKEIGITNRLDAEESIRGGAAYLRDMINRLPESIPESQRMWFALASYNIGYAHVEDARKLAESMELNPNAWQDLKKVLPLLQKRKYYQKTRYGYARGSEAVHYVDSIRRYYDTLVWVDNQSKQQNSEEVAPSDLTAEETPVPAPGTLSPDKPK.

The signal sequence occupies residues M1–V22. Positions E23–V257 are non-LT domain. Residues K258–K478 form an LT domain region. E302 is a catalytic residue. The segment at K447–K478 is disordered.

The protein in the N-terminal section; belongs to the bacterial solute-binding protein 3 family. It in the C-terminal section; belongs to the transglycosylase Slt family.

Its subcellular location is the cell outer membrane. It catalyses the reaction Exolytic cleavage of the (1-&gt;4)-beta-glycosidic linkage between N-acetylmuramic acid (MurNAc) and N-acetylglucosamine (GlcNAc) residues in peptidoglycan, from either the reducing or the non-reducing ends of the peptidoglycan chains, with concomitant formation of a 1,6-anhydrobond in the MurNAc residue.. Its function is as follows. Murein-degrading enzyme that degrades murein glycan strands and insoluble, high-molecular weight murein sacculi, with the concomitant formation of a 1,6-anhydromuramoyl product. Lytic transglycosylases (LTs) play an integral role in the metabolism of the peptidoglycan (PG) sacculus. Their lytic action creates space within the PG sacculus to allow for its expansion as well as for the insertion of various structures such as secretion systems and flagella. The chain is Membrane-bound lytic murein transglycosylase F from Shewanella oneidensis (strain ATCC 700550 / JCM 31522 / CIP 106686 / LMG 19005 / NCIMB 14063 / MR-1).